The chain runs to 590 residues: Aspartate--tRNA(Asp/Asn) ligase (590 aa).

Glu175 lines the L-aspartate pocket. Positions 199–202 (QQYK) are aspartate. Residues Arg221 and His450 each contribute to the L-aspartate site. 221 to 223 (RDE) serves as a coordination point for ATP. Glu484 lines the ATP pocket. Position 491 (Arg491) interacts with L-aspartate. Residue 536-539 (GVDR) coordinates ATP.

This sequence belongs to the class-II aminoacyl-tRNA synthetase family. Type 1 subfamily. Homodimer.

The protein localises to the cytoplasm. It catalyses the reaction tRNA(Asx) + L-aspartate + ATP = L-aspartyl-tRNA(Asx) + AMP + diphosphate. In terms of biological role, aspartyl-tRNA synthetase with relaxed tRNA specificity since it is able to aspartylate not only its cognate tRNA(Asp) but also tRNA(Asn). Reaction proceeds in two steps: L-aspartate is first activated by ATP to form Asp-AMP and then transferred to the acceptor end of tRNA(Asp/Asn). The sequence is that of Aspartate--tRNA(Asp/Asn) ligase from Rhodopseudomonas palustris (strain BisA53).